Reading from the N-terminus, the 436-residue chain is GTPase Obg (436 aa).

Residues 2–160 enclose the Obg domain; that stretch reads SMFLDTAKIQ…RELLLELKVL (159 aa). One can recognise an OBG-type G domain in the interval 161-338; sequence ADVGLVGFPS…LLDATAELLD (178 aa). GTP is bound by residues 167-174, 192-196, 214-217, 284-287, and 319-321; these read GFPSVGKS, FTTIV, DLPG, NKMD, and SSL. Mg(2+)-binding residues include serine 174 and threonine 194. Positions 358-436 constitute an OCT domain; sequence GFDEEAPAFE…IGKFEFEFVD (79 aa).

Belongs to the TRAFAC class OBG-HflX-like GTPase superfamily. OBG GTPase family. As to quaternary structure, monomer. It depends on Mg(2+) as a cofactor.

It is found in the cytoplasm. Functionally, an essential GTPase which binds GTP, GDP and possibly (p)ppGpp with moderate affinity, with high nucleotide exchange rates and a fairly low GTP hydrolysis rate. Plays a role in control of the cell cycle, stress response, ribosome biogenesis and in those bacteria that undergo differentiation, in morphogenesis control. The chain is GTPase Obg from Streptococcus gordonii (strain Challis / ATCC 35105 / BCRC 15272 / CH1 / DL1 / V288).